A 201-amino-acid chain; its full sequence is Recombination protein RecR (201 aa).

Residues Cys57 to Cys72 form a C4-type zinc finger. Residues Gly81–Pro176 enclose the Toprim domain.

It belongs to the RecR family.

Its function is as follows. May play a role in DNA repair. It seems to be involved in an RecBC-independent recombinational process of DNA repair. It may act with RecF and RecO. The chain is Recombination protein RecR from Yersinia enterocolitica serotype O:8 / biotype 1B (strain NCTC 13174 / 8081).